The following is a 371-amino-acid chain: 4-hydroxy-3-methylbut-2-en-1-yl diphosphate synthase (flavodoxin) (371 aa).

[4Fe-4S] cluster contacts are provided by C270, C273, C305, and E312.

Belongs to the IspG family. It depends on [4Fe-4S] cluster as a cofactor.

The enzyme catalyses (2E)-4-hydroxy-3-methylbut-2-enyl diphosphate + oxidized [flavodoxin] + H2O + 2 H(+) = 2-C-methyl-D-erythritol 2,4-cyclic diphosphate + reduced [flavodoxin]. It functions in the pathway isoprenoid biosynthesis; isopentenyl diphosphate biosynthesis via DXP pathway; isopentenyl diphosphate from 1-deoxy-D-xylulose 5-phosphate: step 5/6. Its function is as follows. Converts 2C-methyl-D-erythritol 2,4-cyclodiphosphate (ME-2,4cPP) into 1-hydroxy-2-methyl-2-(E)-butenyl 4-diphosphate. The chain is 4-hydroxy-3-methylbut-2-en-1-yl diphosphate synthase (flavodoxin) from Shewanella pealeana (strain ATCC 700345 / ANG-SQ1).